We begin with the raw amino-acid sequence, 483 residues long: FAD-linked oxidoreductase pgmH (483 aa).

The region spanning 54–215 is the FAD-binding PCMH-type domain; it reads SIRLATLVVY…TEFKYRVHKQ (162 aa).

The protein belongs to the oxygen-dependent FAD-linked oxidoreductase family. FAD serves as cofactor.

Its pathway is pigment biosynthesis. It functions in the pathway secondary metabolite biosynthesis. Functionally, FAD-linked oxidoreductase; part of the gene cluster that mediates the biosynthesis of pleosporalin A, ascomycone A, as well as a third cryptic naphthoquinone derived pigment, all responsible for the coloration of conidia. Essential for the production of pleosporalin A, but not the 2 other final products. The pathway begins with the biosynthesis of the cyclized heptaketide 3-acetonyl-1,6,8-trihydroxy-2-naphthaldehyde by the NR-PKS pgmA. The C-6 hydroxyl group is further methylated by the O-methyltransferase pgmB to yield fusarubinaldehyde which is in turn oxidized by the cytochrome P450 monooxygenase pgmC at C-9. The C-1 hydroxyl group is then methylated spontaneously. Although pgmE, pgmD and pgmH are essential for the production of pleosporalin A, it is not the case for the 2 other final products and it remains difficult to assign a specific function to each enzyme. PgmF and pgmG seem not to be involved in pigment biosynthesis although they were regulated by the cluster-specific transcription factor pgmR. The protein is FAD-linked oxidoreductase pgmH of Aspergillus terreus (strain NIH 2624 / FGSC A1156).